Here is a 90-residue protein sequence, read N- to C-terminus: Cyclin-dependent kinases regulatory subunit 1 (90 aa).

The protein belongs to the CKS family.

Functionally, binds to the catalytic subunit of the cyclin dependent kinases and is essential for their biological function. The sequence is that of Cyclin-dependent kinases regulatory subunit 1 (CKS1) from Oryza sativa subsp. indica (Rice).